A 117-amino-acid polypeptide reads, in one-letter code: Large ribosomal subunit protein bL20 (117 aa).

It belongs to the bacterial ribosomal protein bL20 family.

Its function is as follows. Binds directly to 23S ribosomal RNA and is necessary for the in vitro assembly process of the 50S ribosomal subunit. It is not involved in the protein synthesizing functions of that subunit. This Streptococcus suis (strain 05ZYH33) protein is Large ribosomal subunit protein bL20.